Consider the following 83-residue polypeptide: Short neurotoxin VAN-10 (83 aa).

A signal peptide spans 1–21 (MKTLLLTLVVVTIVCLDLGYT). Cystine bridges form between Cys-24–Cys-45, Cys-38–Cys-62, Cys-64–Cys-75, and Cys-76–Cys-81.

Belongs to the three-finger toxin family. Short-chain subfamily. Type I alpha-neurotoxin sub-subfamily. Expressed by the venom gland.

Its subcellular location is the secreted. Its function is as follows. Binds to muscle nicotinic acetylcholine receptor (nAChR) and inhibit acetylcholine from binding to the receptor, thereby impairing neuromuscular transmission. The protein is Short neurotoxin VAN-10 of Laticauda laticaudata (Blue-ringed sea krait).